The sequence spans 188 residues: Gamma-glutamylcyclotransferase (188 aa).

19-22 contacts substrate; that stretch reads YFAY. Glu-98 serves as the catalytic Proton acceptor. Position 173 is a phosphoserine (Ser-173).

This sequence belongs to the gamma-glutamylcyclotransferase family. Homodimer.

It catalyses the reaction an alpha-(gamma-L-glutamyl)-L-amino acid = 5-oxo-L-proline + an L-alpha-amino acid. Its function is as follows. Catalyzes the formation of 5-oxoproline from gamma-glutamyl dipeptides and may play a significant role in glutathione homeostasis. Induces release of cytochrome c from mitochondria with resultant induction of apoptosis. This is Gamma-glutamylcyclotransferase (Ggct) from Mus musculus (Mouse).